A 618-amino-acid polypeptide reads, in one-letter code: Acetolactate synthase (618 aa).

The segment at 1–30 is disordered; it reads MSAPTKPHSPTFKPEPHSAANEPKHPAARP. A thiamine diphosphate-binding site is contributed by Glu85. Residues Arg187, 293–314, and 336–355 each bind FAD; these read HGTV…LGTR and DIDP…IVGD. Residues 429-509 are thiamine pyrophosphate binding; that stretch reads QHQMWAAQFI…VKVALINNGN (81 aa). Residues Asp480 and Asn507 each coordinate Mg(2+).

Belongs to the TPP enzyme family. Mg(2+) serves as cofactor. It depends on thiamine diphosphate as a cofactor.

It catalyses the reaction 2 pyruvate + H(+) = (2S)-2-acetolactate + CO2. It participates in amino-acid biosynthesis; L-isoleucine biosynthesis; L-isoleucine from 2-oxobutanoate: step 1/4. The protein operates within amino-acid biosynthesis; L-valine biosynthesis; L-valine from pyruvate: step 1/4. The chain is Acetolactate synthase (ilvB) from Mycobacterium bovis (strain ATCC BAA-935 / AF2122/97).